The following is a 156-amino-acid chain: Small ribosomal subunit protein uS7 (156 aa).

The protein belongs to the universal ribosomal protein uS7 family. Part of the 30S ribosomal subunit. Contacts proteins S9 and S11.

Functionally, one of the primary rRNA binding proteins, it binds directly to 16S rRNA where it nucleates assembly of the head domain of the 30S subunit. Is located at the subunit interface close to the decoding center, probably blocks exit of the E-site tRNA. The sequence is that of Small ribosomal subunit protein uS7 from Geobacillus kaustophilus (strain HTA426).